The following is a 179-amino-acid chain: Translation initiation factor IF-3 (179 aa).

This sequence belongs to the IF-3 family. Monomer.

It localises to the cytoplasm. Functionally, IF-3 binds to the 30S ribosomal subunit and shifts the equilibrium between 70S ribosomes and their 50S and 30S subunits in favor of the free subunits, thus enhancing the availability of 30S subunits on which protein synthesis initiation begins. This chain is Translation initiation factor IF-3, found in Treponema pallidum (strain Nichols).